A 390-amino-acid polypeptide reads, in one-letter code: Chalcone synthase (390 aa).

Cysteine 164 is an active-site residue.

This sequence belongs to the thiolase-like superfamily. Chalcone/stilbene synthases family.

It carries out the reaction (E)-4-coumaroyl-CoA + 3 malonyl-CoA + 3 H(+) = 2',4,4',6'-tetrahydroxychalcone + 3 CO2 + 4 CoA. Its pathway is secondary metabolite biosynthesis; flavonoid biosynthesis. Its function is as follows. The primary product of this enzyme is 4,2',4',6'-tetrahydroxychalcone (also termed naringenin-chalcone or chalcone) which can under specific conditions spontaneously isomerize into naringenin. In Antirrhinum majus (Garden snapdragon), this protein is Chalcone synthase (CHS).